A 418-amino-acid chain; its full sequence is Secreted beta-glucosidase SUN41 (418 aa).

An N-terminal signal peptide occupies residues Met1–Ala23. Residues Ser81–Ile97 show a composition bias toward low complexity. Residues Ser81 to Asp150 form a disordered region. Asn100 carries N-linked (GlcNAc...) asparagine glycosylation. The segment covering Ser112–Glu126 has biased composition (polar residues). The span at Ser127 to Thr136 shows a compositional bias: low complexity.

The protein belongs to the SUN family. Post-translationally, predicted to be a substrate for cleavage by KEX2.

The protein resides in the secreted. It localises to the cell wall. Cell surface beta-glucosidase involved in cytokinesis, cell wall biogenesis, adhesion to host tissue, and biofilm formation; thus playing an important role in the host-pathogen interaction. Has hydrolytic activity on linear (1-&gt;3)-beta-D-glucans such as laminaribiose and other laminarioligosaccharides. The chain is Secreted beta-glucosidase SUN41 from Candida albicans (strain SC5314 / ATCC MYA-2876) (Yeast).